We begin with the raw amino-acid sequence, 135 residues long: Small ribosomal subunit protein uS12 (135 aa).

Aspartate 89 bears the 3-methylthioaspartic acid mark. The tract at residues 106–135 (GVKDRKQGRSKYGAKRPKPGQAPAAAGKKK) is disordered. Residues 113–123 (GRSKYGAKRPK) are compositionally biased toward basic residues. Residues 124–135 (PGQAPAAAGKKK) are compositionally biased toward low complexity.

The protein belongs to the universal ribosomal protein uS12 family. Part of the 30S ribosomal subunit. Contacts proteins S8 and S17. May interact with IF1 in the 30S initiation complex.

In terms of biological role, with S4 and S5 plays an important role in translational accuracy. Interacts with and stabilizes bases of the 16S rRNA that are involved in tRNA selection in the A site and with the mRNA backbone. Located at the interface of the 30S and 50S subunits, it traverses the body of the 30S subunit contacting proteins on the other side and probably holding the rRNA structure together. The combined cluster of proteins S8, S12 and S17 appears to hold together the shoulder and platform of the 30S subunit. In Synechococcus sp. (strain JA-3-3Ab) (Cyanobacteria bacterium Yellowstone A-Prime), this protein is Small ribosomal subunit protein uS12.